A 144-amino-acid polypeptide reads, in one-letter code: Granulocyte-macrophage colony-stimulating factor (144 aa).

Residues 1–17 (MWLQNLLFLGIVVYSFS) form the signal peptide. Ser-22 carries an O-linked (GalNAc...) serine glycan. A glycan (O-linked (GalNAc...) threonine) is linked at Thr-27. Intrachain disulfides connect Cys-71–Cys-113 and Cys-105–Cys-138. The N-linked (GlcNAc...) asparagine glycan is linked to Asn-86.

This sequence belongs to the GM-CSF family. In terms of assembly, monomer. The signaling GM-CSF receptor complex is a dodecamer of two head-to-head hexamers of two alpha, two beta, and two ligand subunits.

The protein resides in the secreted. Functionally, cytokine that stimulates the growth and differentiation of hematopoietic precursor cells from various lineages, including granulocytes, macrophages, eosinophils and erythrocytes. This chain is Granulocyte-macrophage colony-stimulating factor (Csf2), found in Rattus norvegicus (Rat).